Consider the following 531-residue polypeptide: 2,3-bisphosphoglycerate-independent phosphoglycerate mutase (531 aa).

Aspartate 15 and serine 65 together coordinate Mn(2+). Residue serine 65 is the Phosphoserine intermediate of the active site. Substrate contacts are provided by residues histidine 126, arginine 155–aspartate 156, arginine 187, arginine 193, arginine 257–arginine 260, and lysine 330. Mn(2+) is bound by residues aspartate 397, histidine 401, aspartate 438, histidine 439, and histidine 456.

Belongs to the BPG-independent phosphoglycerate mutase family. As to quaternary structure, monomer. The cofactor is Mn(2+).

It carries out the reaction (2R)-2-phosphoglycerate = (2R)-3-phosphoglycerate. It participates in carbohydrate degradation; glycolysis; pyruvate from D-glyceraldehyde 3-phosphate: step 3/5. Functionally, catalyzes the interconversion of 2-phosphoglycerate and 3-phosphoglycerate. This Thermosynechococcus vestitus (strain NIES-2133 / IAM M-273 / BP-1) protein is 2,3-bisphosphoglycerate-independent phosphoglycerate mutase.